The chain runs to 712 residues: UvrABC system protein B (712 aa).

A Helicase ATP-binding domain is found at Arg35–Arg421. ATP is bound at residue Gly48–Ser55. The Beta-hairpin motif lies at Tyr101–Ile124. A Helicase C-terminal domain is found at Gln438–Val604. Residues Thr625 to Glu655 are disordered. The 36-residue stretch at Ala667–Glu702 folds into the UVR domain.

It belongs to the UvrB family. As to quaternary structure, forms a heterotetramer with UvrA during the search for lesions. Interacts with UvrC in an incision complex.

The protein resides in the cytoplasm. Functionally, the UvrABC repair system catalyzes the recognition and processing of DNA lesions. A damage recognition complex composed of 2 UvrA and 2 UvrB subunits scans DNA for abnormalities. Upon binding of the UvrA(2)B(2) complex to a putative damaged site, the DNA wraps around one UvrB monomer. DNA wrap is dependent on ATP binding by UvrB and probably causes local melting of the DNA helix, facilitating insertion of UvrB beta-hairpin between the DNA strands. Then UvrB probes one DNA strand for the presence of a lesion. If a lesion is found the UvrA subunits dissociate and the UvrB-DNA preincision complex is formed. This complex is subsequently bound by UvrC and the second UvrB is released. If no lesion is found, the DNA wraps around the other UvrB subunit that will check the other stand for damage. The protein is UvrABC system protein B of Streptomyces coelicolor (strain ATCC BAA-471 / A3(2) / M145).